The following is a 358-amino-acid chain: Phosphoserine aminotransferase (358 aa).

Arginine 41 is a binding site for L-glutamate. Residues 75–76 (AS), tryptophan 100, threonine 148, aspartate 167, and glutamine 190 contribute to the pyridoxal 5'-phosphate site. Lysine 191 is subject to N6-(pyridoxal phosphate)lysine. 233-234 (NT) serves as a coordination point for pyridoxal 5'-phosphate.

It belongs to the class-V pyridoxal-phosphate-dependent aminotransferase family. SerC subfamily. As to quaternary structure, homodimer. It depends on pyridoxal 5'-phosphate as a cofactor.

The protein localises to the cytoplasm. The enzyme catalyses O-phospho-L-serine + 2-oxoglutarate = 3-phosphooxypyruvate + L-glutamate. The catalysed reaction is 4-(phosphooxy)-L-threonine + 2-oxoglutarate = (R)-3-hydroxy-2-oxo-4-phosphooxybutanoate + L-glutamate. Its pathway is amino-acid biosynthesis; L-serine biosynthesis; L-serine from 3-phospho-D-glycerate: step 2/3. It functions in the pathway cofactor biosynthesis; pyridoxine 5'-phosphate biosynthesis; pyridoxine 5'-phosphate from D-erythrose 4-phosphate: step 3/5. Functionally, catalyzes the reversible conversion of 3-phosphohydroxypyruvate to phosphoserine and of 3-hydroxy-2-oxo-4-phosphonooxybutanoate to phosphohydroxythreonine. This Campylobacter jejuni (strain RM1221) protein is Phosphoserine aminotransferase.